Here is a 482-residue protein sequence, read N- to C-terminus: Glutamate--tRNA ligase (482 aa).

A 'HIGH' region motif is present at residues 9–19 (PSPTGPIHVGN). The Zn(2+) site is built by cysteine 106, cysteine 108, cysteine 133, and aspartate 135. Residues 250-254 (KLSKR) carry the 'KMSKS' region motif. Residue lysine 253 coordinates ATP.

This sequence belongs to the class-I aminoacyl-tRNA synthetase family. Glutamate--tRNA ligase type 1 subfamily. Monomer. Zn(2+) is required as a cofactor.

It localises to the cytoplasm. The enzyme catalyses tRNA(Glu) + L-glutamate + ATP = L-glutamyl-tRNA(Glu) + AMP + diphosphate. In terms of biological role, catalyzes the attachment of glutamate to tRNA(Glu) in a two-step reaction: glutamate is first activated by ATP to form Glu-AMP and then transferred to the acceptor end of tRNA(Glu). This Symbiobacterium thermophilum (strain DSM 24528 / JCM 14929 / IAM 14863 / T) protein is Glutamate--tRNA ligase.